Reading from the N-terminus, the 332-residue chain is D-alanine--D-alanine ligase (332 aa).

Residues 1-17 (MPMTMTQSATNPTATPV) are compositionally biased toward polar residues. The tract at residues 1-28 (MPMTMTQSATNPTATPVSANKASANAAT) is disordered. A compositionally biased stretch (low complexity) spans 18–28 (SANKASANAAT). The ATP-grasp domain occupies 132 to 329 (KQLWHGCGLS…FEQLCWHILA (198 aa)). 158–213 (VNTLGLPLIVKPVHEGSSIGMSKVNTLDELPKAYEVAAGCGDVVMAEKWITGREFT) contacts ATP. Asp-283, Glu-296, and Asn-298 together coordinate Mg(2+).

The protein belongs to the D-alanine--D-alanine ligase family. Requires Mg(2+) as cofactor. The cofactor is Mn(2+).

The protein resides in the cytoplasm. It catalyses the reaction 2 D-alanine + ATP = D-alanyl-D-alanine + ADP + phosphate + H(+). It functions in the pathway cell wall biogenesis; peptidoglycan biosynthesis. Cell wall formation. The chain is D-alanine--D-alanine ligase from Psychrobacter sp. (strain PRwf-1).